We begin with the raw amino-acid sequence, 219 residues long: Probable N-acetyltransferase camello (219 aa).

Transmembrane regions (helical) follow at residues 42–62 (FYFI…SYVL) and 64–84 (LTSL…EFHG). One can recognise an N-acetyltransferase domain in the interval 62–218 (LSLTSLVALL…TVIYYRYDIK (157 aa)).

The protein belongs to the camello family. In terms of tissue distribution, at the beginning of gastrulation, expressed in deep cells of the presumptive mesoderm. At later gastrulation stages, expressed at the interface between already involuted and preinvoluted mesoderm. At late neurula and tailbud stages, expressed in the deep mass of cells lying ventrally and laterally to the closed blastopore.

The protein localises to the golgi apparatus membrane. Functionally, plays a role in regulation of gastrulation, possibly by controlled reduction of cell adhesion which is necessary for optimal cell motility. This Xenopus laevis (African clawed frog) protein is Probable N-acetyltransferase camello.